The sequence spans 401 residues: DNA damage checkpoint control protein RAD17 (401 aa).

The tract at residues 367–393 (KKIKLPSEEENNKNRESEDEENHCKYP) is disordered. Residues 371–393 (LPSEEENNKNRESEDEENHCKYP) show a composition bias toward basic and acidic residues. Phosphoserine is present on Ser-383.

This sequence belongs to the rad1 family. Component of the checkpoint clamp complex composed of DDC1, MEC3 and RAD17. The interaction with MEC3 is performed in a RAD17-dependent manner. The checkpoint clamp complex loads onto DNA. Interacts with the DNA polymerase zeta subunit REV7. 2 RAD17 subunits also form a heterotrimer with one MEC3 subunit.

The protein resides in the nucleus. In terms of biological role, component of the checkpoint clamp complex involved in the surveillance mechanism that allows the DNA repair pathways to act to restore the integrity of the DNA prior to DNA synthesis or separation of the replicated chromosomes. Associates with sites of DNA damage and modulates the MEC1 signaling pathway and the activation of RAD53 in response to DNA damage at phase G1. The complex also physically regulates DNA polymerase zeta-dependent mutagenesis by controlling the access of polymerase zeta to damaged DNA. Contrary to its human counterpart, the 9-1-1 complex, the checkpoint clamp complex shows no detectable exonuclease activity. In Saccharomyces cerevisiae (strain ATCC 204508 / S288c) (Baker's yeast), this protein is DNA damage checkpoint control protein RAD17 (RAD17).